The chain runs to 110 residues: DNA-binding protein Tneu_1679 (110 aa).

Belongs to the PDCD5 family.

This is DNA-binding protein Tneu_1679 from Pyrobaculum neutrophilum (strain DSM 2338 / JCM 9278 / NBRC 100436 / V24Sta) (Thermoproteus neutrophilus).